We begin with the raw amino-acid sequence, 93 residues long: Stromal cell-derived factor 1 (93 aa).

The first 21 residues, 1 to 21 (MDAKVVAVLALVLAALCISDG), serve as a signal peptide directing secretion. Residues 22 to 23 (KP) carry the Receptor activation motif motif. The segment at 29 to 33 (RCPCR) is receptor and heparin binding. 2 disulfides stabilise this stretch: cysteine 30-cysteine 55 and cysteine 32-cysteine 71. Receptor binding regions lie at residues 39–41 (IAR), 48–50 (KIL), and 60–70 (VARLKNNNRQV). Heparin-binding positions include 41–51 (RANVKHLKILN), arginine 62, glutamine 69, and lysine 85.

This sequence belongs to the intercrine alpha (chemokine CxC) family. As to quaternary structure, monomer or homodimer; in equilibrium. Dimer formation is induced by non acidic pH and the presence of multivalent anions, and by binding to CXCR4 or heparin. Monomeric form is required for full chemotactic activity and resistance to ischemia/reperfusion injury, whereas the dimeric form acts as a partial agonist of CXCR4, stimulating Ca2+ mobilization but with no chemotactic activity and instead acts as a selective antagonist that blocks chemotaxis induced by the monomeric form. Interacts with the N-terminus of ACKR3. Interacts with integrin subunit ITGB3 (via the allosteric site (site 2)). Interacts with TNFAIP6 (via Link domain). As to expression, highest expression levels detected in kidney, liver, spleen and muscle. Isoform Alpha is expressed ubiquitously but at varying levels, while isoform Beta displays tissue-specific expression, with expression detected in kidney, liver, heart, spleen and muscle but not in lung, colon, brain, skin and stomach.

The protein localises to the secreted. Functionally, chemoattractant active on T-lymphocytes and monocytes but not neutrophils. Activates the C-X-C chemokine receptor CXCR4 to induce a rapid and transient rise in the level of intracellular calcium ions and chemotaxis. Also binds to atypical chemokine receptor ACKR3, which activates the beta-arrestin pathway and acts as a scavenger receptor for SDF-1. Binds to the allosteric site (site 2) of integrins and activates integrins ITGAV:ITGB3, ITGA4:ITGB1 and ITGA5:ITGB1 in a CXCR4-independent manner. Acts as a positive regulator of monocyte migration and a negative regulator of monocyte adhesion via the LYN kinase. Stimulates migration of monocytes and T-lymphocytes through its receptors, CXCR4 and ACKR3, and decreases monocyte adherence to surfaces coated with ICAM-1, a ligand for beta-2 integrins. SDF1A/CXCR4 signaling axis inhibits beta-2 integrin LFA-1 mediated adhesion of monocytes to ICAM-1 through LYN kinase. Plays a protective role after myocardial infarction. Induces down-regulation and internalization of ACKR3 expressed in various cells. Has several critical functions during embryonic development; required for B-cell lymphopoiesis, myelopoiesis in bone marrow and heart ventricular septum formation. Stimulates the proliferation of bone marrow-derived B-cell progenitors in the presence of IL7 as well as growth of stromal cell-dependent pre-B-cells. The sequence is that of Stromal cell-derived factor 1 (Cxcl12) from Mus musculus (Mouse).